A 205-amino-acid chain; its full sequence is Small ribosomal subunit protein uS4 (205 aa).

Residues 19-45 (IWGRPKSPVNRREYGPGQHGQRRKGKL) form a disordered region. An S4 RNA-binding domain is found at 94–157 (RRLDAVVYRA…KQLAFVLEAS (64 aa)).

As to quaternary structure, part of the 30S ribosomal subunit. Contacts protein S5. The interaction surface between S4 and S5 is involved in control of translational fidelity. Post-translationally, may be methylated on an undetermined residue.

One of the primary rRNA binding proteins, it binds directly to 16S rRNA where it nucleates assembly of the body of the 30S subunit. In terms of biological role, with S5 and S12 plays an important role in translational accuracy. This is Small ribosomal subunit protein uS4 from Rhodopseudomonas palustris (strain ATCC BAA-98 / CGA009).